We begin with the raw amino-acid sequence, 419 residues long: Gustatory receptor for bitter taste 93a (419 aa).

Over 1-55 the chain is Cytoplasmic; it reads MFSSSSAMTGKRAESWSRLLLLWLYRCARGLLVLSSSLDRDKLQLKATKQGSRNR. The helical transmembrane segment at 56–76 threads the bilayer; sequence FLHILWRCIVVMIYAGLWPML. Over 77-90 the chain is Extracellular; the sequence is TSAVIGKRLESYAD. Residues 91-111 traverse the membrane as a helical segment; the sequence is VLALAQSMSVSILAVISFVIQ. Over 112–145 the chain is Cytoplasmic; it reads ARGENQFREVLNRYLALYQRICLTTRLRHLFPTK. A helical membrane pass occupies residues 146-166; that stretch reads FVVFFLLKLFFTLCGCFHEII. Residues 167–184 are Extracellular-facing; that stretch reads PLFENSHFDDISQMVGTG. The chain crosses the membrane as a helical span at residues 185 to 205; sequence FGIYMWLGTLCVLDACFLGFL. Over 206-277 the chain is Cytoplasmic; sequence VSGILYEHMA…NSFRRILQWQ (72 aa). A helical membrane pass occupies residues 278 to 298; the sequence is ILFYIYLNFINICLMLYQYIL. Over 299-305 the chain is Extracellular; sequence HFLNDDE. Residues 306-326 form a helical membrane-spanning segment; sequence VVFVSIVMAFVKLANLVLLMM. Residues 327–383 are Cytoplasmic-facing; that stretch reads CADYTVRQSEVPKKLPLDIVCSDMDERWDKSVETFLGQLQTQRLEIKVLGFFHLNNE. The helical transmembrane segment at 384 to 404 threads the bilayer; sequence FILLILSAIISYLFILIQFGI. At 405–419 the chain is on the extracellular side; the sequence is TGGFEASEDIKNRFD.

It belongs to the insect chemoreceptor superfamily. Gustatory receptor (GR) family. Gr93a subfamily. In larvae, is expressed in neurons of the dorsal pharyngeal sense organs.

Its subcellular location is the cell membrane. Gustatory receptor required for response to the bitter in taste neurons. Gr93a cells respond to bitter compounds such as caffeine. Flies avoid bitter substances, suggesting that Gr93a neuron activity is sufficient to mediate avoidance behavior. This is Gustatory receptor for bitter taste 93a (Gr93a) from Drosophila melanogaster (Fruit fly).